We begin with the raw amino-acid sequence, 284 residues long: Serine/threonine-protein phosphatase Pgam5, mitochondrial (284 aa).

The chain crosses the membrane as a helical span at residues 8 to 24; that stretch reads LGVPTATLAVGTLLLGD.

The protein belongs to the phosphoglycerate mutase family. BPG-dependent PGAM subfamily. In terms of assembly, interacts with skn-1 isoforms a and c.

It localises to the mitochondrion outer membrane. The enzyme catalyses O-phospho-L-seryl-[protein] + H2O = L-seryl-[protein] + phosphate. The catalysed reaction is O-phospho-L-threonyl-[protein] + H2O = L-threonyl-[protein] + phosphate. Functionally, displays phosphatase activity for serine/threonine residues. Has apparently no phosphoglycerate mutase activity. The chain is Serine/threonine-protein phosphatase Pgam5, mitochondrial (pgam-5) from Caenorhabditis elegans.